Here is a 270-residue protein sequence, read N- to C-terminus: tRNA pseudouridine synthase A (270 aa).

Asp54 serves as the catalytic Nucleophile. Tyr112 contacts substrate.

Belongs to the tRNA pseudouridine synthase TruA family. Homodimer.

The enzyme catalyses uridine(38/39/40) in tRNA = pseudouridine(38/39/40) in tRNA. Its function is as follows. Formation of pseudouridine at positions 38, 39 and 40 in the anticodon stem and loop of transfer RNAs. This Bordetella bronchiseptica (strain ATCC BAA-588 / NCTC 13252 / RB50) (Alcaligenes bronchisepticus) protein is tRNA pseudouridine synthase A.